The sequence spans 342 residues: Probable dual-specificity RNA methyltransferase RlmN (342 aa).

Glu91 serves as the catalytic Proton acceptor. In terms of domain architecture, Radical SAM core spans 97–327 (YRYGNTVCLS…VTVRRELGDE (231 aa)). A disulfide bond links Cys104 and Cys332. Positions 111, 115, and 118 each coordinate [4Fe-4S] cluster. Residues 158 to 159 (GE), Ser190, 213 to 215 (SLH), and Asn289 each bind S-adenosyl-L-methionine. The active-site S-methylcysteine intermediate is Cys332.

The protein belongs to the radical SAM superfamily. RlmN family. [4Fe-4S] cluster is required as a cofactor.

It localises to the cytoplasm. The catalysed reaction is adenosine(2503) in 23S rRNA + 2 reduced [2Fe-2S]-[ferredoxin] + 2 S-adenosyl-L-methionine = 2-methyladenosine(2503) in 23S rRNA + 5'-deoxyadenosine + L-methionine + 2 oxidized [2Fe-2S]-[ferredoxin] + S-adenosyl-L-homocysteine. It carries out the reaction adenosine(37) in tRNA + 2 reduced [2Fe-2S]-[ferredoxin] + 2 S-adenosyl-L-methionine = 2-methyladenosine(37) in tRNA + 5'-deoxyadenosine + L-methionine + 2 oxidized [2Fe-2S]-[ferredoxin] + S-adenosyl-L-homocysteine. Its function is as follows. Specifically methylates position 2 of adenine 2503 in 23S rRNA and position 2 of adenine 37 in tRNAs. The chain is Probable dual-specificity RNA methyltransferase RlmN from Carboxydothermus hydrogenoformans (strain ATCC BAA-161 / DSM 6008 / Z-2901).